A 99-amino-acid chain; its full sequence is uncharacterized protein (99 aa).

The tract at residues 50–77 (SAHWEDARSSGGTSPIRARAGSEGRGCQ) is disordered.

This is an uncharacterized protein from Homo sapiens (Human).